A 245-amino-acid chain; its full sequence is tRNA pseudouridine synthase A (245 aa).

The active-site Nucleophile is the Asp52. Tyr110 lines the substrate pocket.

It belongs to the tRNA pseudouridine synthase TruA family. Homodimer.

The catalysed reaction is uridine(38/39/40) in tRNA = pseudouridine(38/39/40) in tRNA. Functionally, formation of pseudouridine at positions 38, 39 and 40 in the anticodon stem and loop of transfer RNAs. This Borrelia hermsii (strain HS1 / DAH) protein is tRNA pseudouridine synthase A.